The sequence spans 245 residues: Carbohydrate deacetylase (245 aa).

2 residues coordinate Mg(2+): histidine 59 and histidine 125.

This sequence belongs to the YdjC deacetylase family. Homodimer. Requires Mg(2+) as cofactor.

Its function is as follows. Probably catalyzes the deacetylation of acetylated carbohydrates an important step in the degradation of oligosaccharides. The sequence is that of Carbohydrate deacetylase from Listeria monocytogenes serotype 4a (strain HCC23).